The primary structure comprises 141 residues: MAVERTLSIIKPDAVQKNAIGAILGRFEKAGLRIAAAKMLHLSRDDAGGFYAVHQARPFYGELCDFMSSGPVLVTVLEGEGAIAKNRDLMGATNPKDAAAGTIRADFADSIDANAVHGSDSAETAAWEISYFFGQREIFAH.

ATP-binding residues include lysine 11, phenylalanine 59, arginine 87, threonine 93, arginine 104, and asparagine 114. Catalysis depends on histidine 117, which acts as the Pros-phosphohistidine intermediate.

Belongs to the NDK family. In terms of assembly, homotetramer. Mg(2+) serves as cofactor.

It is found in the cytoplasm. The catalysed reaction is a 2'-deoxyribonucleoside 5'-diphosphate + ATP = a 2'-deoxyribonucleoside 5'-triphosphate + ADP. The enzyme catalyses a ribonucleoside 5'-diphosphate + ATP = a ribonucleoside 5'-triphosphate + ADP. Functionally, major role in the synthesis of nucleoside triphosphates other than ATP. The ATP gamma phosphate is transferred to the NDP beta phosphate via a ping-pong mechanism, using a phosphorylated active-site intermediate. The polypeptide is Nucleoside diphosphate kinase (Acidithiobacillus ferrooxidans (strain ATCC 53993 / BNL-5-31) (Leptospirillum ferrooxidans (ATCC 53993))).